A 248-amino-acid chain; its full sequence is Probable phosphatase VFMJ11_A0899 (248 aa).

9 residues coordinate Zn(2+): His8, His10, His16, His41, Glu74, His101, His131, Asp193, and His195.

It belongs to the PHP family. It depends on Zn(2+) as a cofactor.

The polypeptide is Probable phosphatase VFMJ11_A0899 (Aliivibrio fischeri (strain MJ11) (Vibrio fischeri)).